A 177-amino-acid chain; its full sequence is MITAMYAVGPNGEFGLRGKLPWGSFKEELDAFYSQLDVLNPDNIIIGAGTYLALPYAVRERMIGASDLFIRADRPLPDDITHDIYTPISMIGDTLPTFLKDQQTVVLGGANLLLEMYQHGHIESAFVSTIFSEQKLEADTHLDSMILDYNYESTRLVYAVGANSDNSLRFVQELVTY.

It catalyses the reaction (6S)-5,6,7,8-tetrahydrofolate + NADP(+) = 7,8-dihydrofolate + NADPH + H(+). In terms of biological role, provides the tetrahydrofolates necessary for the synthesis of nucleotides and amino acids. Bacteriophage T5 induces high levels of dihydrofolate reductase in the host cell, probably for the viral replication. The chain is Dihydrofolate reductase from Escherichia phage T5 (Enterobacteria phage T5).